A 438-amino-acid polypeptide reads, in one-letter code: Glutaryl-CoA dehydrogenase, mitochondrial (438 aa).

Residues 1 to 44 (MALRGVSVQLLSRVPGLRVFRTWVSSAAQTEKVGRTQSQLAKSS) constitute a mitochondrion transit peptide. Substrate contacts are provided by residues 138 to 139 (RS) and Ser-186. Residues 177–186 (FGLTEPNSGS), Ser-186, and 212–214 (WIT) each bind FAD. Lys-240 carries the post-translational modification N6-acetyllysine. 287-294 (FGCLNNGR) provides a ligand contact to substrate. FAD contacts are provided by residues Arg-319, Gln-330, and 387 to 391 (DMLGG). Glu-414 serves as the catalytic Proton acceptor. Residue Gly-415 coordinates substrate. FAD contacts are provided by residues Thr-416, 416–418 (THD), and Phe-434.

This sequence belongs to the acyl-CoA dehydrogenase family. In terms of assembly, homotetramer. It depends on FAD as a cofactor.

It localises to the mitochondrion matrix. It carries out the reaction glutaryl-CoA + oxidized [electron-transfer flavoprotein] + 2 H(+) = (2E)-butenoyl-CoA + reduced [electron-transfer flavoprotein] + CO2. The protein operates within amino-acid metabolism; lysine degradation. Its pathway is amino-acid metabolism; tryptophan metabolism. Functionally, catalyzes the oxidative decarboxylation of glutaryl-CoA to crotonyl-CoA and CO(2) in the degradative pathway of L-lysine, L-hydroxylysine, and L-tryptophan metabolism. It uses electron transfer flavoprotein as its electron acceptor. The chain is Glutaryl-CoA dehydrogenase, mitochondrial (GCDH) from Macaca fascicularis (Crab-eating macaque).